The following is a 114-amino-acid chain: UPF0342 protein LCA_0622 (114 aa).

Belongs to the UPF0342 family.

In Latilactobacillus sakei subsp. sakei (strain 23K) (Lactobacillus sakei subsp. sakei), this protein is UPF0342 protein LCA_0622.